Here is a 298-residue protein sequence, read N- to C-terminus: Protease HtpX homolog (298 aa).

2 consecutive transmembrane segments (helical) span residues 14–34 (VVLLVVFFALLALIGASAGYL) and 39–59 (YAMGLVLALVIGVIYATSMIF). Histidine 143 contributes to the Zn(2+) binding site. The active site involves glutamate 144. Histidine 147 lines the Zn(2+) pocket. 2 consecutive transmembrane segments (helical) span residues 158 to 178 (IAVALASAVTVISSIGGRMLW) and 197 to 217 (IITLLLSLLSLLLAPLVASLI). Glutamate 226 lines the Zn(2+) pocket.

This sequence belongs to the peptidase M48B family. The cofactor is Zn(2+).

It is found in the cell membrane. This Streptococcus pyogenes serotype M3 (strain SSI-1) protein is Protease HtpX homolog.